The following is a 395-amino-acid chain: Chorismate synthase (395 aa).

NADP(+)-binding residues include arginine 40 and arginine 46. Residues 135–137 (RAS) and 256–257 (QA) contribute to the FMN site. The segment covering 272–283 (RRGSQAHDEMRP) has biased composition (basic and acidic residues). Residues 272-296 (RRGSQAHDEMRPGPDGILRSTNRAG) are disordered. Residues glycine 300, 315–319 (KPIST), and arginine 341 each bind FMN.

Belongs to the chorismate synthase family. As to quaternary structure, homotetramer. It depends on FMNH2 as a cofactor.

The catalysed reaction is 5-O-(1-carboxyvinyl)-3-phosphoshikimate = chorismate + phosphate. It participates in metabolic intermediate biosynthesis; chorismate biosynthesis; chorismate from D-erythrose 4-phosphate and phosphoenolpyruvate: step 7/7. Catalyzes the anti-1,4-elimination of the C-3 phosphate and the C-6 proR hydrogen from 5-enolpyruvylshikimate-3-phosphate (EPSP) to yield chorismate, which is the branch point compound that serves as the starting substrate for the three terminal pathways of aromatic amino acid biosynthesis. This reaction introduces a second double bond into the aromatic ring system. In Rhodococcus jostii (strain RHA1), this protein is Chorismate synthase.